A 578-amino-acid chain; its full sequence is Proline--tRNA ligase (578 aa).

Belongs to the class-II aminoacyl-tRNA synthetase family. ProS type 1 subfamily. Homodimer.

The protein localises to the cytoplasm. It carries out the reaction tRNA(Pro) + L-proline + ATP = L-prolyl-tRNA(Pro) + AMP + diphosphate. In terms of biological role, catalyzes the attachment of proline to tRNA(Pro) in a two-step reaction: proline is first activated by ATP to form Pro-AMP and then transferred to the acceptor end of tRNA(Pro). As ProRS can inadvertently accommodate and process non-cognate amino acids such as alanine and cysteine, to avoid such errors it has two additional distinct editing activities against alanine. One activity is designated as 'pretransfer' editing and involves the tRNA(Pro)-independent hydrolysis of activated Ala-AMP. The other activity is designated 'posttransfer' editing and involves deacylation of mischarged Ala-tRNA(Pro). The misacylated Cys-tRNA(Pro) is not edited by ProRS. The sequence is that of Proline--tRNA ligase from Burkholderia orbicola (strain AU 1054).